Here is a 530-residue protein sequence, read N- to C-terminus: Phosphoenolpyruvate carboxykinase (ATP) (530 aa).

The substrate site is built by Arg-57, Tyr-193, and Lys-199. Residues Lys-199, His-218, and 234–242 (GLSGTGKTT) contribute to the ATP site. Mn(2+) contacts are provided by Lys-199 and His-218. Asp-255 lines the Mn(2+) pocket. 3 residues coordinate ATP: Glu-283, Arg-320, and Thr-445. Arg-320 provides a ligand contact to substrate.

Belongs to the phosphoenolpyruvate carboxykinase (ATP) family. Requires Mn(2+) as cofactor.

Its subcellular location is the cytoplasm. It catalyses the reaction oxaloacetate + ATP = phosphoenolpyruvate + ADP + CO2. It participates in carbohydrate biosynthesis; gluconeogenesis. Functionally, involved in the gluconeogenesis. Catalyzes the conversion of oxaloacetate (OAA) to phosphoenolpyruvate (PEP) through direct phosphoryl transfer between the nucleoside triphosphate and OAA. The protein is Phosphoenolpyruvate carboxykinase (ATP) of Leptospira interrogans serogroup Icterohaemorrhagiae serovar copenhageni (strain Fiocruz L1-130).